We begin with the raw amino-acid sequence, 296 residues long: Nucleotide-binding protein SGO_0954 (296 aa).

13–20 (GMSGAGKT) is an ATP binding site. Residue 63–66 (DMRS) coordinates GTP.

Belongs to the RapZ-like family.

Displays ATPase and GTPase activities. The protein is Nucleotide-binding protein SGO_0954 of Streptococcus gordonii (strain Challis / ATCC 35105 / BCRC 15272 / CH1 / DL1 / V288).